The sequence spans 203 residues: Small ribosomal subunit protein uS4 (203 aa).

Residues 93–156 form the S4 RNA-binding domain; the sequence is RRLDNVVYRL…LKVPAILEAV (64 aa).

It belongs to the universal ribosomal protein uS4 family. In terms of assembly, part of the 30S ribosomal subunit. Contacts protein S5. The interaction surface between S4 and S5 is involved in control of translational fidelity.

Functionally, one of the primary rRNA binding proteins, it binds directly to 16S rRNA where it nucleates assembly of the body of the 30S subunit. With S5 and S12 plays an important role in translational accuracy. The chain is Small ribosomal subunit protein uS4 from Streptococcus pneumoniae serotype 2 (strain D39 / NCTC 7466).